Here is a 599-residue protein sequence, read N- to C-terminus: Calmodulin-binding protein 60 E (599 aa).

The interval 1–21 (MNKRGYECSQEDTDKLPESKR) is disordered. Residues 1-80 (MNKRGYECSQ…LTSRSPEPKR (80 aa)) form a calmodulin-binding region. Positions 150-273 (EDDEDWTREH…VLHKKLLKAN (124 aa)) are DNA-binding.

The protein belongs to the plant ACBP60 protein family. Interacts with calmodulin (CaM).

The protein resides in the nucleus. Transcription activator that binds DNA in a sequence-specific manner, likely 5'-GAAATTTTGG-3', to promote the expression of target genes. This is Calmodulin-binding protein 60 E from Arabidopsis thaliana (Mouse-ear cress).